The chain runs to 218 residues: Uracil-DNA glycosylase (218 aa).

Catalysis depends on Asp-68, which acts as the Proton acceptor.

This sequence belongs to the uracil-DNA glycosylase (UDG) superfamily. UNG family. As to quaternary structure, homodimer. Interacts with protein OPG148. Component of the Uracil-DNA glycosylase(UDG)-OPG148-polymerase complex; OPG148 and UDG form a heterodimeric processivity factor that associates with OPG71 to form the processive polymerase holoenzyme.

It catalyses the reaction Hydrolyzes single-stranded DNA or mismatched double-stranded DNA and polynucleotides, releasing free uracil.. Its function is as follows. Plays an essential role in viral replication as a component of the DNA polymerase processivity factor. Excises uracil residues from the DNA which can arise as a result of misincorporation of dUMP residues by DNA polymerase or due to deamination of cytosine. The sequence is that of Uracil-DNA glycosylase (OPG116) from Vaccinia virus (strain Ankara) (VACV).